Here is a 507-residue protein sequence, read N- to C-terminus: ATP synthase subunit alpha, chloroplastic (507 aa).

Residue 170-177 coordinates ATP; it reads GDRQTGKT.

This sequence belongs to the ATPase alpha/beta chains family. F-type ATPases have 2 components, CF(1) - the catalytic core - and CF(0) - the membrane proton channel. CF(1) has five subunits: alpha(3), beta(3), gamma(1), delta(1), epsilon(1). CF(0) has four main subunits: a, b, b' and c.

Its subcellular location is the plastid. It localises to the chloroplast thylakoid membrane. The catalysed reaction is ATP + H2O + 4 H(+)(in) = ADP + phosphate + 5 H(+)(out). Its function is as follows. Produces ATP from ADP in the presence of a proton gradient across the membrane. The alpha chain is a regulatory subunit. The sequence is that of ATP synthase subunit alpha, chloroplastic from Acorus calamus var. americanus (American sweet flag).